We begin with the raw amino-acid sequence, 306 residues long: UDP-3-O-acyl-N-acetylglucosamine deacetylase (306 aa).

Residues His81, His241, and Asp245 each coordinate Zn(2+). The active-site Proton donor is His268.

The protein belongs to the LpxC family. It depends on Zn(2+) as a cofactor.

It catalyses the reaction a UDP-3-O-[(3R)-3-hydroxyacyl]-N-acetyl-alpha-D-glucosamine + H2O = a UDP-3-O-[(3R)-3-hydroxyacyl]-alpha-D-glucosamine + acetate. The protein operates within glycolipid biosynthesis; lipid IV(A) biosynthesis; lipid IV(A) from (3R)-3-hydroxytetradecanoyl-[acyl-carrier-protein] and UDP-N-acetyl-alpha-D-glucosamine: step 2/6. Its function is as follows. Catalyzes the hydrolysis of UDP-3-O-myristoyl-N-acetylglucosamine to form UDP-3-O-myristoylglucosamine and acetate, the committed step in lipid A biosynthesis. The protein is UDP-3-O-acyl-N-acetylglucosamine deacetylase of Hydrogenovibrio crunogenus (strain DSM 25203 / XCL-2) (Thiomicrospira crunogena).